Reading from the N-terminus, the 847-residue chain is Leucine--tRNA ligase (847 aa).

The 'HIGH' region signature appears at 43-53 (PYPSGKLHMGH). Positions 607-611 (KMSKS) match the 'KMSKS' region motif. An ATP-binding site is contributed by K610.

This sequence belongs to the class-I aminoacyl-tRNA synthetase family.

The protein resides in the cytoplasm. It catalyses the reaction tRNA(Leu) + L-leucine + ATP = L-leucyl-tRNA(Leu) + AMP + diphosphate. This is Leucine--tRNA ligase from Buchnera aphidicola subsp. Cinara cedri (strain Cc).